The sequence spans 95 residues: Large ribosomal subunit protein uL23 (95 aa).

Belongs to the universal ribosomal protein uL23 family. As to quaternary structure, part of the 50S ribosomal subunit. Contacts protein L29, and trigger factor when it is bound to the ribosome.

Its function is as follows. One of the early assembly proteins it binds 23S rRNA. One of the proteins that surrounds the polypeptide exit tunnel on the outside of the ribosome. Forms the main docking site for trigger factor binding to the ribosome. This chain is Large ribosomal subunit protein uL23, found in Lawsonia intracellularis (strain PHE/MN1-00).